Reading from the N-terminus, the 248-residue chain is B-box zinc finger protein 24 (248 aa).

Positions 5, 8, 28, 33, 57, 60, 80, and 85 each coordinate Zn(2+). The B box-type 1; atypical zinc finger occupies 5-47; sequence CDVCEKAPATVICCADEAALCPQCDIEIHAANKLASKHQRLHL. The B box-type 2; atypical zinc finger occupies 57-99; that stretch reads CDICQEKAAFIFCVEDRALLCRDCDESIHVANSRSANHQRFLA. The tract at residues 115–148 is disordered; sequence IEKNQPEPSNNQQKANQIPAKSTSQQQQQPSSAT. The segment covering 120–130 has biased composition (polar residues); it reads PEPSNNQQKAN. The span at 131–148 shows a compositional bias: low complexity; that stretch reads QIPAKSTSQQQQQPSSAT. The Nuclear localization signal signature appears at 226-229; that stretch reads KKPR. The segment at 236 to 248 is interaction with COP1; sequence DDDEEHFIVPDLG.

In terms of assembly, interacts with COP1 WD40 domain. Interacts with HY5 and HYH. Interacts with RCD1 and TRP4. COP1-mediated ubiquitination and subsequent proteasomal degradation of BBX24/STO occurs in the dark. As to expression, high expression in leaves and lower in roots and flowers.

The protein resides in the nucleus. Acts as a negative regulator of seedling photomorphogenesis and light-regulated inhibition of hypocotyl elongation. BBX24/STO and BBX25/STH function as transcriptional corepressors of HY5 activity, leading to the down-regulation of BBX22 expression. BBX24/STO acts additively with BBX25/STH during de-etiolation and the hypocotyl shade avoidance response. Functions as a negative regulator of photomorphogenic UV-B responses by interacting with both COP1 and HY5. May act as a transcription factor in the salt-stress response. The polypeptide is B-box zinc finger protein 24 (Arabidopsis thaliana (Mouse-ear cress)).